Here is a 323-residue protein sequence, read N- to C-terminus: Di/tripeptide transport ATP-binding protein DppF (323 aa).

In terms of domain architecture, ABC transporter spans 5 to 254; it reads LTARDLTRHY…PLHPYTRALL (250 aa). 47–54 contacts ATP; it reads GESGCGKS.

Belongs to the ABC transporter superfamily. In terms of assembly, the complex is composed of two ATP-binding proteins (DppD and DppF), two transmembrane proteins (DppB and DppC) and a solute-binding protein (DppA1-A5). Five orthologous SBPs (DppA1-A5) are present in P.aeruginosa, which increases the substrate specificity of the DppBCDF transporter.

It is found in the cell inner membrane. It carries out the reaction a dipeptide(out) + ATP + H2O = a dipeptide(in) + ADP + phosphate + H(+). In terms of biological role, part of the ABC transporter DppABCDF involved in the uptake of various di/tripeptides. Is also involved in the uptake of phaseolotoxin, a toxic tripeptide inhibiting the enzyme ornithine carbamoyltransferase. Responsible for energy coupling to the transport system. This is Di/tripeptide transport ATP-binding protein DppF from Pseudomonas aeruginosa (strain UCBPP-PA14).